We begin with the raw amino-acid sequence, 331 residues long: Porphobilinogen deaminase (331 aa).

Cysteine 248 bears the S-(dipyrrolylmethanemethyl)cysteine mark. The segment at 307-331 (QLLQAPKQTGEPHDPDRHDKGTGRP) is disordered. Basic and acidic residues predominate over residues 316-331 (GEPHDPDRHDKGTGRP).

It belongs to the HMBS family. In terms of assembly, monomer. The cofactor is dipyrromethane.

It catalyses the reaction 4 porphobilinogen + H2O = hydroxymethylbilane + 4 NH4(+). It participates in porphyrin-containing compound metabolism; protoporphyrin-IX biosynthesis; coproporphyrinogen-III from 5-aminolevulinate: step 2/4. Tetrapolymerization of the monopyrrole PBG into the hydroxymethylbilane pre-uroporphyrinogen in several discrete steps. This is Porphobilinogen deaminase from Acidothermus cellulolyticus (strain ATCC 43068 / DSM 8971 / 11B).